Consider the following 332-residue polypeptide: Nucleoid-associated protein VVA0877 (332 aa).

It belongs to the YejK family.

It is found in the cytoplasm. Its subcellular location is the nucleoid. The protein is Nucleoid-associated protein VVA0877 of Vibrio vulnificus (strain YJ016).